The primary structure comprises 306 residues: Pantothenate kinase (306 aa).

91–98 (GSVAVGKS) lines the ATP pocket.

It belongs to the prokaryotic pantothenate kinase family.

It localises to the cytoplasm. It carries out the reaction (R)-pantothenate + ATP = (R)-4'-phosphopantothenate + ADP + H(+). The protein operates within cofactor biosynthesis; coenzyme A biosynthesis; CoA from (R)-pantothenate: step 1/5. This Streptococcus pyogenes serotype M18 (strain MGAS8232) protein is Pantothenate kinase (coaA).